We begin with the raw amino-acid sequence, 338 residues long: tRNA(Ile)-lysidine synthase (338 aa).

ATP is bound at residue 23-28; it reads SGGLDS.

It belongs to the tRNA(Ile)-lysidine synthase family.

The protein resides in the cytoplasm. The catalysed reaction is cytidine(34) in tRNA(Ile2) + L-lysine + ATP = lysidine(34) in tRNA(Ile2) + AMP + diphosphate + H(+). Its function is as follows. Ligates lysine onto the cytidine present at position 34 of the AUA codon-specific tRNA(Ile) that contains the anticodon CAU, in an ATP-dependent manner. Cytidine is converted to lysidine, thus changing the amino acid specificity of the tRNA from methionine to isoleucine. The polypeptide is tRNA(Ile)-lysidine synthase (Helicobacter pylori (strain J99 / ATCC 700824) (Campylobacter pylori J99)).